The sequence spans 403 residues: 3-hydroxy-3-methylglutaryl-coenzyme A reductase (403 aa).

Residues Glu-99 and Asp-303 each act as charge relay system in the active site. His-398 acts as the Proton donor in catalysis.

It belongs to the HMG-CoA reductase family.

It catalyses the reaction (R)-mevalonate + 2 NADP(+) + CoA = (3S)-3-hydroxy-3-methylglutaryl-CoA + 2 NADPH + 2 H(+). It functions in the pathway metabolic intermediate biosynthesis; (R)-mevalonate biosynthesis; (R)-mevalonate from acetyl-CoA: step 3/3. Is competitively inhibited by (R)-HMG-CoA and lovastatin (formerly called mevinolin). In terms of biological role, catalyzes the NADPH-dependent reductive deacylation of (S)-3-hydroxy-3-methylglutaryl-CoA (HMG-CoA) to (R)-mevalonate. Functions in the mevalonate (MVA) pathway leading to isopentenyl diphosphate (IPP), a key precursor for the biosynthesis of isoprenoid compounds such as archaeal membrane lipids. Is also able to catalyze the reduction of mevaldehyde to mevalonate and the oxidative acylation of mevaldehyde to HMG-CoA. This Haloferax volcanii (strain ATCC 29605 / DSM 3757 / JCM 8879 / NBRC 14742 / NCIMB 2012 / VKM B-1768 / DS2) (Halobacterium volcanii) protein is 3-hydroxy-3-methylglutaryl-coenzyme A reductase (hmgA).